Reading from the N-terminus, the 481-residue chain is ATP synthase subunit beta (481 aa).

Position 167–174 (Gly167–Thr174) interacts with ATP.

The protein belongs to the ATPase alpha/beta chains family. In terms of assembly, F-type ATPases have 2 components, CF(1) - the catalytic core - and CF(0) - the membrane proton channel. CF(1) has five subunits: alpha(3), beta(3), gamma(1), delta(1), epsilon(1). CF(0) has three main subunits: a(1), b(2) and c(9-12). The alpha and beta chains form an alternating ring which encloses part of the gamma chain. CF(1) is attached to CF(0) by a central stalk formed by the gamma and epsilon chains, while a peripheral stalk is formed by the delta and b chains.

It is found in the cell membrane. It carries out the reaction ATP + H2O + 4 H(+)(in) = ADP + phosphate + 5 H(+)(out). In terms of biological role, produces ATP from ADP in the presence of a proton gradient across the membrane. The catalytic sites are hosted primarily by the beta subunits. This is ATP synthase subunit beta from Corynebacterium jeikeium (strain K411).